Reading from the N-terminus, the 253-residue chain is Imidazole glycerol phosphate synthase subunit HisF (253 aa).

Active-site residues include aspartate 13 and aspartate 132.

Belongs to the HisA/HisF family. Heterodimer of HisH and HisF.

The protein resides in the cytoplasm. The catalysed reaction is 5-[(5-phospho-1-deoxy-D-ribulos-1-ylimino)methylamino]-1-(5-phospho-beta-D-ribosyl)imidazole-4-carboxamide + L-glutamine = D-erythro-1-(imidazol-4-yl)glycerol 3-phosphate + 5-amino-1-(5-phospho-beta-D-ribosyl)imidazole-4-carboxamide + L-glutamate + H(+). Its pathway is amino-acid biosynthesis; L-histidine biosynthesis; L-histidine from 5-phospho-alpha-D-ribose 1-diphosphate: step 5/9. In terms of biological role, IGPS catalyzes the conversion of PRFAR and glutamine to IGP, AICAR and glutamate. The HisF subunit catalyzes the cyclization activity that produces IGP and AICAR from PRFAR using the ammonia provided by the HisH subunit. The polypeptide is Imidazole glycerol phosphate synthase subunit HisF (Aliarcobacter butzleri (strain RM4018) (Arcobacter butzleri)).